Reading from the N-terminus, the 430-residue chain is Glutamyl-tRNA reductase (430 aa).

Residues 49 to 52 (TCNR), Ser-109, 114 to 116 (EGQ), and Gln-120 contribute to the substrate site. The Nucleophile role is filled by Cys-50. An NADP(+)-binding site is contributed by 189–194 (GAGKMA).

Belongs to the glutamyl-tRNA reductase family. As to quaternary structure, homodimer.

The catalysed reaction is (S)-4-amino-5-oxopentanoate + tRNA(Glu) + NADP(+) = L-glutamyl-tRNA(Glu) + NADPH + H(+). It participates in porphyrin-containing compound metabolism; protoporphyrin-IX biosynthesis; 5-aminolevulinate from L-glutamyl-tRNA(Glu): step 1/2. The protein operates within porphyrin-containing compound metabolism; chlorophyll biosynthesis. Functionally, catalyzes the NADPH-dependent reduction of glutamyl-tRNA(Glu) to glutamate 1-semialdehyde (GSA). This is Glutamyl-tRNA reductase from Crocosphaera subtropica (strain ATCC 51142 / BH68) (Cyanothece sp. (strain ATCC 51142)).